Here is a 143-residue protein sequence, read N- to C-terminus: UPF0225 protein Reut_A0143 (143 aa).

Belongs to the UPF0225 family.

This Cupriavidus pinatubonensis (strain JMP 134 / LMG 1197) (Cupriavidus necator (strain JMP 134)) protein is UPF0225 protein Reut_A0143.